Consider the following 123-residue polypeptide: Ribosome-binding factor A (123 aa).

It belongs to the RbfA family. As to quaternary structure, monomer. Binds 30S ribosomal subunits, but not 50S ribosomal subunits or 70S ribosomes.

It is found in the cytoplasm. One of several proteins that assist in the late maturation steps of the functional core of the 30S ribosomal subunit. Associates with free 30S ribosomal subunits (but not with 30S subunits that are part of 70S ribosomes or polysomes). Required for efficient processing of 16S rRNA. May interact with the 5'-terminal helix region of 16S rRNA. The chain is Ribosome-binding factor A from Ralstonia nicotianae (strain ATCC BAA-1114 / GMI1000) (Ralstonia solanacearum).